The primary structure comprises 334 residues: D-alanine--D-alanine ligase (334 aa).

The ATP-grasp domain occupies 111 to 315 (KRVCLSHGVP…YEDLCIEILR (205 aa)). 141–196 (AAEFGLPLMLKAPHEGSTIGIAKVETAEGMQAGFDLCAKYEAVVLVEQFVKGRELT) serves as a coordination point for ATP. The Mg(2+) site is built by Asp-268, Glu-282, and Asn-284.

The protein belongs to the D-alanine--D-alanine ligase family. It depends on Mg(2+) as a cofactor. Mn(2+) is required as a cofactor.

It is found in the cytoplasm. It carries out the reaction 2 D-alanine + ATP = D-alanyl-D-alanine + ADP + phosphate + H(+). It functions in the pathway cell wall biogenesis; peptidoglycan biosynthesis. Its function is as follows. Cell wall formation. This is D-alanine--D-alanine ligase from Herminiimonas arsenicoxydans.